Here is a 221-residue protein sequence, read N- to C-terminus: Leucine rich adaptor protein 1-like (221 aa).

The residue at position 1 (methionine 1) is an N-acetylmethionine. Residues 1-81 (MEDGPLPDLR…SGSPRRSHPS (81 aa)) form a disordered region. 2 stretches are compositionally biased toward basic and acidic residues: residues 8–21 (DLRDIELKLGRKVP) and 28–39 (LRGEEPAPREGA). A compositionally biased stretch (low complexity) spans 48-75 (SCSSSSSCSSFAPSVSSSSSSSPASGSP).

The chain is Leucine rich adaptor protein 1-like (Lurap1l) from Rattus norvegicus (Rat).